The primary structure comprises 579 residues: MFS-type transporter olcL (579 aa).

Residues 1 to 24 (MANIGGSNAVSSAQGSQISDSPTT) are compositionally biased toward polar residues. Residues 1 to 75 (MANIGGSNAV…GFGEDGCQSD (75 aa)) form a disordered region. Residues 25–35 (VDDRLDEHKET) show a composition bias toward basic and acidic residues. Polar residues predominate over residues 36–54 (STQSIDHSENITQSPTSLQ). Asparagine 45 carries N-linked (GlcNAc...) asparagine glycosylation. The next 9 membrane-spanning stretches (helical) occupy residues 85 to 105 (LAAIMIGVCLAVFSMALDNTI), 121 to 141 (GDVGWYGSVYPLTNCCLTLVF), 159 to 179 (AVFEIGSLICGATPSSLGLII), 183 to 203 (IAGLGSSGIYLGSMIILSQSV), 214 to 234 (LVGGLYGVAGVAGPLLGGAFT), 241 to 261 (WCFYINPLFGAVTALFILLFF), 282 to 302 (LIGLFFFLPGMISLLLALQWG), 310 to 330 (SGRIIGLFVCSICLLSIFIMV), and 355 to 375 (LFNFCITGSFLVFSYYLPVWF). Residue asparagine 380 is glycosylated (N-linked (GlcNAc...) asparagine). Helical transmembrane passes span 388–408 (LMNLPMLLGVILCSIISGYGV), 411–431 (IGYYTPFMYAAPIVSAIGAGL), 439–459 (FGPSQWIGYQALYGIGLGLGL), 479–501 (IAIVTFIQSLGGSVSVSIAQNVF), and 553–573 (FYVGAAFSVLAMIGALPIQWI).

This sequence belongs to the major facilitator superfamily. TCR/Tet family.

It is found in the peroxisome membrane. Functionally, MFS-type transporter; part of the gene cluster that mediates the biosynthesis of 15-deoxyoxalicine B. The first step of the pathway is the synthesis of nicotinyl-CoA from nicotinic acid by the nicotinic acid-CoA ligase olcI. Nicotinyl-CoA is then a substrate of polyketide synthase olcA to produce 4-hydroxy-6-(3-pyridinyl)-2H-pyran-2-one (HPPO) which is further prenylated by the polyprenyl transferase olcH to yield geranylgeranyl-HPPO. Geranylgeranyl pyrophosphate is provided by the cluster-specific geranylgeranyl pyrophosphate synthase olcC. The FAD-dependent monooxygenase olcE catalyzes the epoxidation of geranylgeranyl-HPPO and the terpene cyclase olcD catalyzes the cyclization of the terpenoid component, resulting in the formation of the tricyclic terpene moiety seen in predecaturin E. The cytochrome P450 monooxygenase then catalyzes the allylic oxidation of predecaturin E, which is followed by spirocylization with concomitant loss of one molecule of water to form decaturin E. Decaturin E is the substrate of the cytochrome P450 monooxygenase olcJ which hydroxylates it at the C-29 position to form decaturin F. The short-chain dehydrogenase/reductase olcF may catalyze the oxidation of decaturin F to generate the 29-hydroxyl-27-one intermediate, and subsequent hemiacetal formation probably leads to the formation of decaturin C. The dioxygenase olcK may be a peroxisomal enzyme that catalyzes the hydroxylation of decaturin C into decaturin A once decaturin C is shuttled into the peroxisome by the MFS transporter olcL. Finally the cytochrome P450 monooxygenase olcB catalyzes the oxidative rearrangement to yield 15-deoxyoxalicine B. In the absence of olcJ, decaturin E may be shunted to a pathway in which it is oxidized to a ketone, possibly by olcF, to form decaturin D, which undergoes further allylic oxidation to yield decaturin G. Moreover, in the absence of oclK or oclL, oclB can convert decaturin C into 15-deoxyoxalicine A. This is MFS-type transporter olcL from Penicillium canescens.